A 1323-amino-acid chain; its full sequence is Clustered mitochondria protein homolog (1323 aa).

A TPR 1 repeat occupies 103–141 (KEKPYNLAAIYDHLNKFREVIGLHFLDKYSSEVGVLSGV). The interval 149 to 186 (LQDVKETEPETQDDKDKETDETKSTKEDSNQTEEKKSE) is disordered. A compositionally biased stretch (basic and acidic residues) spans 150-186 (QDVKETEPETQDDKDKETDETKSTKEDSNQTEEKKSE). The region spanning 351-608 (FANQPDASRS…RATPLDIEFI (258 aa)) is the Clu domain. Residues 530 to 563 (CYGLSTDGSKIFSDSSFENVLKPIAEAFHLKPHP) form a TPR 2 repeat. Residues 764–801 (NEEEISKRKEESEKKATEGKDQDKEEEKANDNEKNKED) are compositionally biased toward basic and acidic residues. The interval 764–808 (NEEEISKRKEESEKKATEGKDQDKEEEKANDNEKNKEDDKEEVSN) is disordered. TPR repeat units lie at residues 1042–1076 (LSVY…KSEA), 1099–1132 (ITAY…WTLV), 1141–1174 (VNTY…STKL), and 1183–1216 (GMLR…FTKF). The disordered stretch occupies residues 1250–1323 (KALAQQASAS…KKSNNKKSKK (74 aa)). Basic residues predominate over residues 1308–1323 (PKKQLKKKSNNKKSKK).

This sequence belongs to the CLU family. May associate with the eukaryotic translation initiation factor 3 (eIF-3) complex.

It localises to the cytoplasm. Functionally, mRNA-binding protein involved in proper cytoplasmic distribution of mitochondria. The sequence is that of Clustered mitochondria protein homolog from Debaryomyces hansenii (strain ATCC 36239 / CBS 767 / BCRC 21394 / JCM 1990 / NBRC 0083 / IGC 2968) (Yeast).